The sequence spans 403 residues: MELLFTATLLHFIRLFEKAHEENVKKADLEKKKAANETEMKHVVHNSWLNNLNIRASTLIDQRRAFNTMIMLQKVEMPLPDMMAAVLGMDESVLDVDQIENLIRFCPTKEEMKLLKNYTGDKATLGKCEQYFLELMKVPGVESKLRVFSFKIHFGTQIKELNKGLNTVNSACEEIRTSQKLKEIMKIILCLGNILNQGTARGSAVGFKLDSLLNLSEKCSANTNMTLMHYLCKVLASKASDLLDFHKDLENLESASKIHLKSLAEEMVAITKGLQKLNQELTASESDGPISEVFRKLLKDFISVAETQVATVSSLYSSVGGNTDALVHYFGEDPNDYPFEQVTATLLSFVRLFTTAAHQENVKQAELEKKKAAKEAEMEKTKKRVSLTNKKASGVGEEESCLI.

One can recognise an FH2 domain in the interval Met1 to Lys380. A disordered region spans residues Ala373–Ile403.

Belongs to the formin-like family. Class-II subfamily.

This Arabidopsis thaliana (Mouse-ear cress) protein is Formin-like protein 21b (FH21B).